We begin with the raw amino-acid sequence, 378 residues long: Ribosomal RNA large subunit methyltransferase G (378 aa).

This sequence belongs to the methyltransferase superfamily. RlmG family.

The protein localises to the cytoplasm. It carries out the reaction guanosine(1835) in 23S rRNA + S-adenosyl-L-methionine = N(2)-methylguanosine(1835) in 23S rRNA + S-adenosyl-L-homocysteine + H(+). Specifically methylates the guanine in position 1835 (m2G1835) of 23S rRNA. This chain is Ribosomal RNA large subunit methyltransferase G, found in Salmonella gallinarum (strain 287/91 / NCTC 13346).